The chain runs to 390 residues: Formate-dependent phosphoribosylglycinamide formyltransferase (390 aa).

N(1)-(5-phospho-beta-D-ribosyl)glycinamide contacts are provided by residues 18-19 and Glu78; that span reads EL. Residues Arg110, Lys151, 156–161, 191–194, and Glu199 each bind ATP; these read SSGKGQ and EEFL. The ATP-grasp domain maps to 115–305; it reads DLASKELNIK…EFELHLRAFL (191 aa). Positions 264 and 276 each coordinate Mg(2+). N(1)-(5-phospho-beta-D-ribosyl)glycinamide-binding positions include Asp283, Lys353, and 360-361; that span reads RR.

The protein belongs to the PurK/PurT family. In terms of assembly, homodimer.

It catalyses the reaction N(1)-(5-phospho-beta-D-ribosyl)glycinamide + formate + ATP = N(2)-formyl-N(1)-(5-phospho-beta-D-ribosyl)glycinamide + ADP + phosphate + H(+). It functions in the pathway purine metabolism; IMP biosynthesis via de novo pathway; N(2)-formyl-N(1)-(5-phospho-D-ribosyl)glycinamide from N(1)-(5-phospho-D-ribosyl)glycinamide (formate route): step 1/1. Functionally, involved in the de novo purine biosynthesis. Catalyzes the transfer of formate to 5-phospho-ribosyl-glycinamide (GAR), producing 5-phospho-ribosyl-N-formylglycinamide (FGAR). Formate is provided by PurU via hydrolysis of 10-formyl-tetrahydrofolate. The polypeptide is Formate-dependent phosphoribosylglycinamide formyltransferase (Prochlorococcus marinus subsp. pastoris (strain CCMP1986 / NIES-2087 / MED4)).